Consider the following 381-residue polypeptide: Lipopolysaccharide 1,2-N-acetylglucosaminetransferase (381 aa).

This sequence belongs to the glycosyltransferase group 1 family. Glycosyltransferase 4 subfamily.

It localises to the cell inner membrane. It catalyses the reaction UDP-N-acetyl-alpha-D-glucosamine + [lipopolysaccharide] = UDP + N-acetyl-alpha-D-glucosaminyl-[lipopolysaccharide].. The protein operates within bacterial outer membrane biogenesis; LPS core biosynthesis. Functionally, transferase involved in the biosynthesis of the core oligosaccharide region of lipopolysaccharide (LPS). Catalyzes the addition of the terminal N-acetyl-D-glucosamine (GlcNAc) group to the outer-core glucose II, the last step of the lipid A-core oligosaccharide biosynthesis. This is Lipopolysaccharide 1,2-N-acetylglucosaminetransferase from Salmonella typhimurium (strain LT2 / SGSC1412 / ATCC 700720).